Reading from the N-terminus, the 175-residue chain is Large ribosomal subunit protein uL10 (175 aa).

This sequence belongs to the universal ribosomal protein uL10 family. In terms of assembly, part of the ribosomal stalk of the 50S ribosomal subunit. The N-terminus interacts with L11 and the large rRNA to form the base of the stalk. The C-terminus forms an elongated spine to which L12 dimers bind in a sequential fashion forming a multimeric L10(L12)X complex.

In terms of biological role, forms part of the ribosomal stalk, playing a central role in the interaction of the ribosome with GTP-bound translation factors. The polypeptide is Large ribosomal subunit protein uL10 (Prochlorococcus marinus (strain AS9601)).